The primary structure comprises 206 residues: MDEDVLTTLKILIIGESGVGKSSLLLRFTDDTFDPELAATIGVDFKVKTISVDGNKAKLAIWDTAGQERFRTLTPSYYRGAQGVILVYDVTRRDTFVKLDNWLNELETYCTRNDIVNMLVGNKIDKENREVDRNEGLKFARKHSMLFIEASAKTCDGVQCAFEELVEKIIQTPGLWESENQNKGVKLSHREEGQGGGACGGYCSVL.

Position 1 is an N-acetylmethionine (Met1). GTP-binding residues include Ser17, Gly20, Lys21, Ser22, Ser23, Asp34, Pro35, Thr40, Gly66, Lys123, and Asp125. Ser22 contributes to the Mg(2+) binding site. 2 short sequence motifs (switch) span residues 31–45 (DTFD…GVDF) and 63–80 (DTAG…YYRG). Residue Thr40 participates in Mg(2+) binding. Ser144 carries the phosphoserine modification. Ala152 contacts GTP. The S-palmitoyl cysteine moiety is linked to residue Cys199. At Cys203 the chain carries Cysteine methyl ester. Residue Cys203 is the site of S-geranylgeranyl cysteine attachment. Positions 204–206 (SVL) are cleaved as a propeptide — removed in mature form.

It belongs to the small GTPase superfamily. Rab family. In terms of assembly, interacts (in GTP-bound form) with ZFYVE1. Interacts with ZW10 and this interaction is enhanced in the presence of ZFYVE1. Interacts with BSCL2. (Microbial infection) Interacts with Hepatitis C virus (HCV) non-structural protein 5A; this interaction may promote the association of NS5A and other viral replicase components with lipid droplets. Mg(2+) serves as cofactor. Ubiquitous.

The protein resides in the endoplasmic reticulum membrane. The protein localises to the golgi apparatus. It is found in the cis-Golgi network membrane. It localises to the lipid droplet. Its subcellular location is the apical cell membrane. The enzyme catalyses GTP + H2O = GDP + phosphate + H(+). Its activity is regulated as follows. Regulated by guanine nucleotide exchange factor (GEF) RAB3GAP1-RAB3GAP2 complex at the cis-Golgi membrane which promotes the exchange of bound GDP for free GTP. Regulated by GTPase activating protein (GAP) TBC1D20 at the ER membrane which increases the GTP hydrolysis activity. Inhibited by GDP dissociation inhibitors (GDIs) which prevent Rab-GDP dissociation. Functionally, the small GTPases Rab are key regulators of intracellular membrane trafficking, from the formation of transport vesicles to their fusion with membranes. Rabs cycle between an inactive GDP-bound form and an active GTP-bound form that is able to recruit to membranes different sets of downstream effectors directly responsible for vesicle formation, movement, tethering and fusion. RAB18 is required for the localization of ZFYVE1 to lipid droplets and for its function in mediating the formation of endoplasmic reticulum-lipid droplets (ER-LD) contacts. Also required for maintaining endoplasmic reticulum structure. Plays a role in apical endocytosis/recycling. Plays a key role in eye and brain development and neurodegeneration. The chain is Ras-related protein Rab-18 from Homo sapiens (Human).